The chain runs to 411 residues: O-glucosyltransferase rumi (411 aa).

A signal peptide spans 1 to 20; it reads MLINHLIVVLLISLVGTGGA. Disulfide bonds link C64-C75, C73-C378, C120-C126, and C282-C305. The active-site Proton donor/acceptor is the D151. The segment at 192–197 is interaction with the consensus sequence C-X-S-X-[PA]-C in peptide substrates; sequence ATKLHP. UDP-alpha-D-glucose-binding positions include 229-233, R237, 276-278, and 294-298; these read RGSRT, VSF, and AASFR. The Prevents secretion from ER motif lies at 408-411; that stretch reads KDEL.

It belongs to the glycosyltransferase 90 family.

It is found in the endoplasmic reticulum lumen. The protein operates within protein modification; protein glycosylation. Protein O-glucosyltransferase. Catalyzes the reaction that attaches glucose through an O-glycosidic linkage to a conserved serine residue found in the consensus sequence C-X-S-X-[PA]-C in epidermal growth factor-like repeats. Regulates Notch signaling by glucosylating Notch in the ER, glucosylation is required for the correct folding and cleavage of Notch. The protein is O-glucosyltransferase rumi of Drosophila melanogaster (Fruit fly).